A 411-amino-acid chain; its full sequence is Tyrosine--tRNA ligase (411 aa).

Tyr33 is an L-tyrosine binding site. A 'HIGH' region motif is present at residues 38 to 47; that stretch reads PTADSLHLGN. L-tyrosine-binding residues include Tyr160 and Gln164. Positions 222 to 226 match the 'KMSKS' region motif; that stretch reads KFGKS. Lys225 contributes to the ATP binding site. Positions 346 to 410 constitute an S4 RNA-binding domain; sequence VNLVNFLVEN…GKKKILICKV (65 aa).

It belongs to the class-I aminoacyl-tRNA synthetase family. TyrS type 1 subfamily. In terms of assembly, homodimer.

It localises to the cytoplasm. The enzyme catalyses tRNA(Tyr) + L-tyrosine + ATP = L-tyrosyl-tRNA(Tyr) + AMP + diphosphate + H(+). Its function is as follows. Catalyzes the attachment of tyrosine to tRNA(Tyr) in a two-step reaction: tyrosine is first activated by ATP to form Tyr-AMP and then transferred to the acceptor end of tRNA(Tyr). The chain is Tyrosine--tRNA ligase from Mycoplasmopsis synoviae (strain 53) (Mycoplasma synoviae).